Consider the following 759-residue polypeptide: GTPase-activating protein rrc-1 (759 aa).

The SH3 domain maps to 164-243; the sequence is PAIAAAVVTK…PRDCVMLIDD (80 aa). The 194-residue stretch at 280–473 folds into the Rho-GAP domain; it reads LELTDLYMRT…FFIENSESLF (194 aa). The interval 591–624 is disordered; sequence ARSMRPTSRPPPSPRTRRARFSNGSSNNVQKLNE. Residues 612-622 show a composition bias toward polar residues; sequence SNGSSNNVQKL.

In terms of tissue distribution, expressed in coelomocytes, excretory cells, uterine-seam cells and GLR cells.

In terms of biological role, functions as a GTPase-activating protein (GAP) for ced-10/rac-1 and CDC42. The sequence is that of GTPase-activating protein rrc-1 (rrc-1) from Caenorhabditis elegans.